Reading from the N-terminus, the 175-residue chain is ATP synthase subunit d, mitochondrial (175 aa).

S2 is subject to N-acetylserine.

This sequence belongs to the ATPase d subunit family.

The protein resides in the mitochondrion inner membrane. Functionally, mitochondrial membrane ATP synthase (F(1)F(0) ATP synthase or Complex V) produces ATP from ADP in the presence of a proton gradient across the membrane which is generated by electron transport complexes of the respiratory chain. F-type ATPases consist of two structural domains, F(1) - containing the extramembraneous catalytic core, and F(0) - containing the membrane proton channel, linked together by a central stalk and a peripheral stalk. During catalysis, ATP synthesis in the catalytic domain of F(1) is coupled via a rotary mechanism of the central stalk subunits to proton translocation. Part of the complex F(0) domain and the peripheric stalk, which acts as a stator to hold the catalytic alpha(3)beta(3) subcomplex and subunit a/ATP6 static relative to the rotary elements. This is ATP synthase subunit d, mitochondrial (atp7) from Schizosaccharomyces pombe (strain 972 / ATCC 24843) (Fission yeast).